A 185-amino-acid polypeptide reads, in one-letter code: Ribosome-recycling factor (185 aa).

Belongs to the RRF family.

The protein resides in the cytoplasm. Responsible for the release of ribosomes from messenger RNA at the termination of protein biosynthesis. May increase the efficiency of translation by recycling ribosomes from one round of translation to another. In Chloroflexus aurantiacus (strain ATCC 29364 / DSM 637 / Y-400-fl), this protein is Ribosome-recycling factor.